The chain runs to 308 residues: Serine/threonine-protein phosphatase 4 catalytic subunit (308 aa).

Asp51, His53, Asp79, and Asn111 together coordinate Mn(2+). The active-site Proton donor is the His112. His161 and His235 together coordinate Mn(2+).

This sequence belongs to the PPP phosphatase family. PP-4 (PP-X) subfamily. As to quaternary structure, catalytic subunit of the histone H2A phosphatase complex (HTP-C) containing PPH3, PSY2 and PSY4. Inactivated in a complex with phosphatase methylesterase PPE1 (PP2Ai). Interacts with phosphatase 2A activator RRD1, which can reactivate PP2Ai by dissociating the catalytic subunit from the complex. Interacts with SPT5 and TAP42. It depends on Mn(2+) as a cofactor. In terms of processing, reversibly methyl esterified on Leu-308 by leucine carboxyl methyltransferase 1 (PPM1) and protein phosphatase methylesterase 1 (PPE1). Carboxyl methylation influences the affinity of the catalytic subunit for the different regulatory subunits, thereby modulating the PP2A holoenzyme's substrate specificity, enzyme activity and cellular localization.

It is found in the cytoplasm. The protein localises to the nucleus. The catalysed reaction is O-phospho-L-seryl-[protein] + H2O = L-seryl-[protein] + phosphate. It carries out the reaction O-phospho-L-threonyl-[protein] + H2O = L-threonyl-[protein] + phosphate. In terms of biological role, forms the histone H2A phosphatase complex in association with the regulatory subunits PSY2 and PSY4, which dephosphorylates H2AS128ph (gamma-H2A) that has been displaced from sites of DNA lesions in the double-stranded DNA break repair process. Dephosphorylation is necessary for efficient recovery from the DNA damage checkpoint. PPH3 is directly involved in the dephosphorylation and activation of the transcription factor GLN3 in response to nutrient availability. The polypeptide is Serine/threonine-protein phosphatase 4 catalytic subunit (PPH3) (Saccharomyces cerevisiae (strain ATCC 204508 / S288c) (Baker's yeast)).